We begin with the raw amino-acid sequence, 96 residues long: (4S)-4-hydroxy-5-phosphonooxypentane-2,3-dione isomerase (96 aa).

The ABM domain maps to 2 to 91; the sequence is HVTLVEINVH…MTGPRKKRLF (90 aa).

The protein belongs to the LsrG family. In terms of assembly, homodimer.

It localises to the cytoplasm. It carries out the reaction (2S)-2-hydroxy-3,4-dioxopentyl phosphate = 3-hydroxy-2,4-dioxopentyl phosphate. Its function is as follows. Involved in the degradation of phospho-AI-2, thereby terminating induction of the lsr operon and closing the AI-2 signaling cycle. Catalyzes the conversion of (4S)-4-hydroxy-5-phosphonooxypentane-2,3-dione (P-DPD) to 3-hydroxy-5-phosphonooxypentane-2,4-dione (P-HPD). In Escherichia coli O157:H7, this protein is (4S)-4-hydroxy-5-phosphonooxypentane-2,3-dione isomerase.